The chain runs to 191 residues: MAALHTLWMGLVLLGVLGVLQTQAQVQVSLQPNFQQDKFLGRWFTSGLASNSSWFREKKKVLSMCVSVVAPSADGGLNLTSTFLRKEQCETRTLLLRPAGTPGCYSYTSPHWGSTHDVWVAMTDYDEYALLYTTGTKGLGQDFHMATLYSRTQTPRAEIKEKFTTFAKTQGFTEDAIVFLPQTDKCMEEHK.

A signal peptide spans 1-24 (MAALHTLWMGLVLLGVLGVLQTQA). Residue Gln25 is modified to Pyrrolidone carboxylic acid. N-linked (GlcNAc...) asparagine glycosylation occurs at Asn51. The Nucleophile role is filled by Cys65. Residue Asn78 is glycosylated (N-linked (GlcNAc...) asparagine). A disulfide bond links Cys89 and Cys186.

The protein belongs to the calycin superfamily. Lipocalin family. As to quaternary structure, monomer.

The protein resides in the rough endoplasmic reticulum. Its subcellular location is the nucleus membrane. It localises to the golgi apparatus. It is found in the cytoplasm. The protein localises to the perinuclear region. The protein resides in the secreted. The catalysed reaction is prostaglandin H2 = prostaglandin D2. In terms of biological role, catalyzes the conversion of PGH2 to PGD2, a prostaglandin involved in smooth muscle contraction/relaxation and a potent inhibitor of platelet aggregation. Involved in a variety of CNS functions, such as sedation, NREM sleep and PGE2-induced allodynia, and may have an anti-apoptotic role in oligodendrocytes. Binds small non-substrate lipophilic molecules, including biliverdin, bilirubin, retinal, retinoic acid and thyroid hormone, and may act as a scavenger for harmful hydrophobic molecules and as a secretory retinoid and thyroid hormone transporter. Possibly involved in development and maintenance of the blood-brain, blood-retina, blood-aqueous humor and blood-testis barrier. It is likely to play important roles in both maturation and maintenance of the central nervous system and male reproductive system. Involved in PLA2G3-dependent maturation of mast cells. PLA2G3 is secreted by immature mast cells and acts on nearby fibroblasts upstream to PTDGS to synthesize PGD2, which in turn promotes mast cell maturation and degranulation via PTGDR. This is Prostaglandin-H2 D-isomerase (PTGDS) from Ursus arctos (Brown bear).